We begin with the raw amino-acid sequence, 765 residues long: Zinc finger and BTB domain-containing protein 49 (765 aa).

One can recognise a BTB domain in the interval Cys25–Gln91. Disordered regions lie at residues Gln165–Thr203 and Asn275–Cys294. 7 C2H2-type zinc fingers span residues Tyr395–His417, Phe423–His445, Tyr451–His473, His479–His501, Phe507–His529, Tyr535–His557, and Tyr563–His585.

The protein belongs to the krueppel C2H2-type zinc-finger protein family. In terms of assembly, isoform 1 interacts with EP300 and KAT5/Tip60. The interaction with EP300 is direct and leads to synergistic induction of CDKN1A. On the CDKN1A promoter, forms a complex with ZBTB17/Miz-1; this interaction leads to additive CDKN1A transactivation. Isoform 3 also interacts with ZBTB17; this interaction may block ZBTB17 repressor activity. Highly expressed in normal epidermis and in other epithelial tissues, including in colon and lung. Tends to be down-regulated in colon, lung and skin cancer tissues.

Its subcellular location is the cytoplasm. It localises to the nucleus. Transcription factor. Inhibits cell proliferation by activating either CDKN1A/p21 transcription or RB1 transcription. In terms of biological role, binds CDKN1A promoter and activates its transcription; this activity is further potentiated in the presence of EP300 (synergistic) and ZBTB17/Miz-1 (additive). Its function is as follows. Activates RB1 transcription most probably by antagonizing ZBTB17 repression of RB1. Does not bind directly RB1 promoter. The chain is Zinc finger and BTB domain-containing protein 49 (ZBTB49) from Homo sapiens (Human).